The chain runs to 575 residues: Developmental and secondary metabolism regulator VEL1 (575 aa).

In terms of domain architecture, Velvet spans 21–225 (GRKLKYTLTV…AEQGCRVRIR (205 aa)). The Nuclear localization signal motif lies at 35–40 (ERARAC). Disordered stretches follow at residues 36–56 (RARA…VDPP) and 227–402 (DVRM…QSYE). Over residues 274–284 (VHEDPQQRRGS) the composition is skewed to basic and acidic residues. Residues 294 to 308 (VVNTPFRTPSISPST) show a composition bias toward polar residues. The span at 334-346 (IQPPHPPPPPPSS) shows a compositional bias: pro residues. Polar residues-rich tracts occupy residues 355-365 (HHNQGPSTQFR) and 385-402 (SYSQ…QSYE). Residues 465 to 509 (AEQPLAMSPLASVTSISRGTQNSAPMPSHNYNKLERSGSYSQYAP) form a PEST region. Residues 513–549 (EAPKSTNKRSFNDVFSTPTESLSNGRRPSAIGIDIEE) are disordered. Polar residues predominate over residues 516 to 538 (KSTNKRSFNDVFSTPTESLSNGR).

It belongs to the velvet family. VeA subfamily. As to quaternary structure, component of the heterotrimeric velvet complex composed of LAE1, VEL1 and VEL2; VEL1 acting as a bridging protein between LAE1 and VEL2.

The protein localises to the nucleus. It is found in the cytoplasm. In terms of biological role, component of the velvet transcription factor complex that controls sexual/asexual developmental ratio in response to light, promoting sexual development in the darkness while stimulating asexual sporulation under illumination. The velvet complex hat acts as a global regulator for secondary metabolite gene expression. Controls the expression of the oxalic acid and melanin gene clusters. Also controls the expression of proteases and carbohydrate-active enzymes. Involved in the resistance to oxidative stress. Required for full virulence. This chain is Developmental and secondary metabolism regulator VEL1, found in Botryotinia fuckeliana (strain B05.10) (Noble rot fungus).